Here is a 141-residue protein sequence, read N- to C-terminus: Hemoglobin subunit alpha-2 (141 aa).

In terms of domain architecture, Globin spans 1 to 141 (VLSSQDKANV…VKHVLTSKYR (141 aa)). Residue histidine 58 participates in O2 binding. Residue histidine 87 coordinates heme b.

This sequence belongs to the globin family. As to quaternary structure, minor hemoglobin is a heterotetramer of two alpha-2 chains and two beta-2 chains. As to expression, red blood cells.

Involved in oxygen transport from the lung to the various peripheral tissues. In Triturus cristatus (Great crested newt), this protein is Hemoglobin subunit alpha-2.